Here is a 269-residue protein sequence, read N- to C-terminus: Tryptophan synthase alpha chain (269 aa).

Residues E49 and D60 each act as proton acceptor in the active site.

The protein belongs to the TrpA family. Tetramer of two alpha and two beta chains.

It catalyses the reaction (1S,2R)-1-C-(indol-3-yl)glycerol 3-phosphate + L-serine = D-glyceraldehyde 3-phosphate + L-tryptophan + H2O. The protein operates within amino-acid biosynthesis; L-tryptophan biosynthesis; L-tryptophan from chorismate: step 5/5. Functionally, the alpha subunit is responsible for the aldol cleavage of indoleglycerol phosphate to indole and glyceraldehyde 3-phosphate. In Acidovorax ebreus (strain TPSY) (Diaphorobacter sp. (strain TPSY)), this protein is Tryptophan synthase alpha chain.